Reading from the N-terminus, the 595-residue chain is Solute carrier family 13 member 1 (595 aa).

The next 5 membrane-spanning stretches (helical) occupy residues 13–33, 41–61, 77–97, 108–128, and 131–151; these read FLFV…LHTK, LFVV…TALL, VASA…CLAT, IALK…LGFM, and TAFL…MPIA. Residues asparagine 174 and asparagine 207 are each glycosylated (N-linked (GlcNAc...) asparagine). A run of 8 helical transmembrane segments spans residues 239–259, 290–310, 348–368, 381–401, 464–484, 491–511, 512–532, and 554–574; these read LTCL…ITGT, PAAL…FLGF, IVTL…DPGF, GFAT…LIPA, PLGS…VTSL, PATI…IHVN, PLYI…LPVA, and GLGV…TWIV. N-linked (GlcNAc...) asparagine glycosylation occurs at asparagine 591.

It belongs to the SLC13A/DASS transporter (TC 2.A.47) family. NADC subfamily. As to expression, highly expressed in kidney; not detectable in the other tissues tested.

The protein localises to the apical cell membrane. The catalysed reaction is sulfate(out) + 3 Na(+)(out) = sulfate(in) + 3 Na(+)(in). The enzyme catalyses selenate(out) + 3 Na(+)(out) = selenate(in) + 3 Na(+)(in). It carries out the reaction thiosulfate(out) + 3 Na(+)(out) = thiosulfate(in) + 3 Na(+)(in). Its activity is regulated as follows. Inhibited by thiosulfate, selenate, molybdate, tungstate, citrate and succinate. In terms of biological role, sodium:sulfate symporter that mediates sulfate reabsorption in the kidney and small intestine. Can also mediate the transport of selenate and thiosulfate. The sequence is that of Solute carrier family 13 member 1 (SLC13A1) from Homo sapiens (Human).